The chain runs to 642 residues: Threonine--tRNA ligase (642 aa).

The TGS domain maps to 1–61; sequence MPVITLPDGS…DTDSELSIIT (61 aa). Positions 243–534 are catalytic; that stretch reads DHRKIGKQLD…LIEEYAGKFP (292 aa). The Zn(2+) site is built by Cys334, His385, and His511.

The protein belongs to the class-II aminoacyl-tRNA synthetase family. As to quaternary structure, homodimer. Zn(2+) serves as cofactor.

It localises to the cytoplasm. It catalyses the reaction tRNA(Thr) + L-threonine + ATP = L-threonyl-tRNA(Thr) + AMP + diphosphate + H(+). In terms of biological role, catalyzes the attachment of threonine to tRNA(Thr) in a two-step reaction: L-threonine is first activated by ATP to form Thr-AMP and then transferred to the acceptor end of tRNA(Thr). Also edits incorrectly charged L-seryl-tRNA(Thr). The chain is Threonine--tRNA ligase from Shewanella piezotolerans (strain WP3 / JCM 13877).